Reading from the N-terminus, the 409-residue chain is NADH-quinone oxidoreductase subunit D (409 aa).

The protein belongs to the complex I 49 kDa subunit family. In terms of assembly, NDH-1 is composed of 14 different subunits. Subunits NuoB, C, D, E, F, and G constitute the peripheral sector of the complex.

It localises to the cell inner membrane. It catalyses the reaction a quinone + NADH + 5 H(+)(in) = a quinol + NAD(+) + 4 H(+)(out). Functionally, NDH-1 shuttles electrons from NADH, via FMN and iron-sulfur (Fe-S) centers, to quinones in the respiratory chain. The immediate electron acceptor for the enzyme in this species is believed to be ubiquinone. Couples the redox reaction to proton translocation (for every two electrons transferred, four hydrogen ions are translocated across the cytoplasmic membrane), and thus conserves the redox energy in a proton gradient. This is NADH-quinone oxidoreductase subunit D from Helicobacter hepaticus (strain ATCC 51449 / 3B1).